Here is a 236-residue protein sequence, read N- to C-terminus: tRNA (guanine-N(1)-)-methyltransferase (236 aa).

S-adenosyl-L-methionine is bound by residues G110 and 129–134; that span reads LGDFVL.

It belongs to the RNA methyltransferase TrmD family. As to quaternary structure, homodimer.

It is found in the cytoplasm. It carries out the reaction guanosine(37) in tRNA + S-adenosyl-L-methionine = N(1)-methylguanosine(37) in tRNA + S-adenosyl-L-homocysteine + H(+). Specifically methylates guanosine-37 in various tRNAs. The polypeptide is tRNA (guanine-N(1)-)-methyltransferase (Clostridium perfringens (strain ATCC 13124 / DSM 756 / JCM 1290 / NCIMB 6125 / NCTC 8237 / Type A)).